Reading from the N-terminus, the 235-residue chain is Small ribosomal subunit protein uS2 (235 aa).

Belongs to the universal ribosomal protein uS2 family.

The chain is Small ribosomal subunit protein uS2 from Geobacillus sp. (strain WCH70).